The following is a 308-amino-acid chain: Probable 5-dehydro-4-deoxyglucarate dehydratase (308 aa).

It belongs to the DapA family.

The enzyme catalyses 5-dehydro-4-deoxy-D-glucarate + H(+) = 2,5-dioxopentanoate + CO2 + H2O. It participates in carbohydrate acid metabolism; D-glucarate degradation; 2,5-dioxopentanoate from D-glucarate: step 2/2. The protein is Probable 5-dehydro-4-deoxyglucarate dehydratase of Oceanobacillus iheyensis (strain DSM 14371 / CIP 107618 / JCM 11309 / KCTC 3954 / HTE831).